Reading from the N-terminus, the 282-residue chain is Bis(5'-nucleosyl)-tetraphosphatase, symmetrical (282 aa).

Belongs to the Ap4A hydrolase family.

It carries out the reaction P(1),P(4)-bis(5'-adenosyl) tetraphosphate + H2O = 2 ADP + 2 H(+). In terms of biological role, hydrolyzes diadenosine 5',5'''-P1,P4-tetraphosphate to yield ADP. In Sodalis glossinidius (strain morsitans), this protein is Bis(5'-nucleosyl)-tetraphosphatase, symmetrical.